The chain runs to 100 residues: Apolipoprotein C-II (100 aa).

A signal peptide spans 1–22; sequence MGSRFLLALFLILLVLGCEVQA. Residues 66–74 form a lipid binding region; the sequence is SVDEKLRDM. The lipoprotein lipase cofactor stretch occupies residues 78–100; that stretch reads SSAAMTTYASIFTDQILTLLKGE.

Belongs to the apolipoprotein C2 family. In terms of processing, proapolipoprotein C-II is synthesized as a sialic acid containing glycoprotein which is subsequently desialylated prior to its proteolytic processing. Proapolipoprotein C-II, the major form found in plasma undergoes proteolytic cleavage of its N-terminal hexapeptide to generate the mature form apolipoprotein C-II, which occurs as the minor form in plasma.

Its subcellular location is the secreted. Component of chylomicrons, very low-density lipoproteins (VLDL), low-density lipoproteins (LDL), and high-density lipoproteins (HDL) in plasma. Plays an important role in lipoprotein metabolism as an activator of lipoprotein lipase. The sequence is that of Apolipoprotein C-II (APOC2) from Microtus ochrogaster (Prairie vole).